Reading from the N-terminus, the 98-residue chain is NADH-ubiquinone oxidoreductase chain 4L (98 aa).

3 helical membrane passes run 1–21 (MMSISLNLTMAFLLALAGVLI), 28–48 (STLLCLEGMMLSLFILMALLI), and 59–79 (APLILLVFSACEAGVGLALLV).

This sequence belongs to the complex I subunit 4L family. In terms of assembly, core subunit of respiratory chain NADH dehydrogenase (Complex I) which is composed of 45 different subunits.

It is found in the mitochondrion inner membrane. The enzyme catalyses a ubiquinone + NADH + 5 H(+)(in) = a ubiquinol + NAD(+) + 4 H(+)(out). Functionally, core subunit of the mitochondrial membrane respiratory chain NADH dehydrogenase (Complex I) which catalyzes electron transfer from NADH through the respiratory chain, using ubiquinone as an electron acceptor. Part of the enzyme membrane arm which is embedded in the lipid bilayer and involved in proton translocation. The sequence is that of NADH-ubiquinone oxidoreductase chain 4L (MT-ND4L) from Osphranter robustus (Wallaroo).